The following is a 449-amino-acid chain: UDP-N-acetylmuramoylalanine--D-glutamate ligase (449 aa).

ATP is bound at residue 118 to 124 (GTNGKTT).

Belongs to the MurCDEF family.

Its subcellular location is the cytoplasm. It catalyses the reaction UDP-N-acetyl-alpha-D-muramoyl-L-alanine + D-glutamate + ATP = UDP-N-acetyl-alpha-D-muramoyl-L-alanyl-D-glutamate + ADP + phosphate + H(+). Its pathway is cell wall biogenesis; peptidoglycan biosynthesis. Its function is as follows. Cell wall formation. Catalyzes the addition of glutamate to the nucleotide precursor UDP-N-acetylmuramoyl-L-alanine (UMA). The sequence is that of UDP-N-acetylmuramoylalanine--D-glutamate ligase from Staphylococcus epidermidis (strain ATCC 35984 / DSM 28319 / BCRC 17069 / CCUG 31568 / BM 3577 / RP62A).